A 143-amino-acid chain; its full sequence is Small ribosomal subunit protein eS19y (143 aa).

This sequence belongs to the eukaryotic ribosomal protein eS19 family.

In Arabidopsis thaliana (Mouse-ear cress), this protein is Small ribosomal subunit protein eS19y (RPS19B).